We begin with the raw amino-acid sequence, 687 residues long: uncharacterized protein (687 aa).

Helical transmembrane passes span 28-48, 66-86, 94-114, 126-146, 154-174, 182-202, 211-231, 243-263, 287-307, 320-340, 348-368, 378-398, 414-434, and 480-500; these read IIFTALVFGVLVAATGQTIVV, WAVTSYLLGGTVVVVVAGKLG, VLLGSVVVFVVGSVLCGLSQT, GVGAGAISVTAYALAAEVVPL, GVLGAVFGVNTVTGPLLGGWL, WAFWINVPVSIAVLTVAATAV, PVIDYLGILVIAVATTALIMA, SATIVGLLIGAAVALGFFVWL, VLSFVVGFAMLGALTFVPIYL, LRTLPMVIGLLIASTGTGVLV, IFPVAGMALMAVAFLLMSQMD, LYLVVLGAGIGLSMQVLVLIV, VTFFRVVGASFGTATFGALFV, and LTQVFLCAVSVTVVGFILALL.

This sequence belongs to the major facilitator superfamily. TCR/Tet family.

It localises to the cell membrane. This is an uncharacterized protein from Mycobacterium tuberculosis (strain CDC 1551 / Oshkosh).